Here is a 364-residue protein sequence, read N- to C-terminus: Dihydroorotate dehydrogenase (quinone) (364 aa).

Residues 61-65 and T85 each bind FMN; that span reads AGYDK. A substrate-binding site is contributed by K65. 110-114 is a substrate binding site; it reads NRLGF. Positions 139 and 170 each coordinate FMN. A substrate-binding site is contributed by N170. S173 serves as the catalytic Nucleophile. N175 provides a ligand contact to substrate. 2 residues coordinate FMN: K215 and S243. 244–245 lines the substrate pocket; sequence NT. FMN contacts are provided by residues G266, G295, and 316–317; that span reads YT.

It belongs to the dihydroorotate dehydrogenase family. Type 2 subfamily. Monomer. FMN is required as a cofactor.

Its subcellular location is the cell membrane. The catalysed reaction is (S)-dihydroorotate + a quinone = orotate + a quinol. Its pathway is pyrimidine metabolism; UMP biosynthesis via de novo pathway; orotate from (S)-dihydroorotate (quinone route): step 1/1. In terms of biological role, catalyzes the conversion of dihydroorotate to orotate with quinone as electron acceptor. In Brucella canis (strain ATCC 23365 / NCTC 10854 / RM-666), this protein is Dihydroorotate dehydrogenase (quinone).